The following is a 155-amino-acid chain: Small ribosomal subunit protein uS7c (155 aa).

The protein belongs to the universal ribosomal protein uS7 family. As to quaternary structure, part of the 30S ribosomal subunit.

The protein localises to the plastid. It localises to the chloroplast. In terms of biological role, one of the primary rRNA binding proteins, it binds directly to 16S rRNA where it nucleates assembly of the head domain of the 30S subunit. This Gunnera chilensis (Chilean rhubarb) protein is Small ribosomal subunit protein uS7c (rps7).